The primary structure comprises 174 residues: MTQPLFLIGPRGCGKTTVGMALADSLNRRFVDTDLWLQSQLNMTVAEIVEREEWAGFRARETAALEAVTAPSTVIATGGGIILTEFNRHFMQNNGIVVYLCAPVSVLVNRLQAAPEEDLRPTLTGKPLSEEVQEVLEERDALYREVAHIIIDATNEPSQVISEIRSALAQTINC.

12-17 (GCGKTT) serves as a coordination point for ATP. T16 and D32 together coordinate Mg(2+). D34, R58, and G79 together coordinate substrate. Residues 112–126 (QAAPEEDLRPTLTGK) are LID domain. An ATP-binding site is contributed by R120. R139 contacts substrate.

It belongs to the shikimate kinase family. AroL subfamily. As to quaternary structure, monomer. Requires Mg(2+) as cofactor.

It is found in the cytoplasm. It carries out the reaction shikimate + ATP = 3-phosphoshikimate + ADP + H(+). The protein operates within metabolic intermediate biosynthesis; chorismate biosynthesis; chorismate from D-erythrose 4-phosphate and phosphoenolpyruvate: step 5/7. Functionally, catalyzes the specific phosphorylation of the 3-hydroxyl group of shikimic acid using ATP as a cosubstrate. In Escherichia coli O1:K1 / APEC, this protein is Shikimate kinase 2.